The primary structure comprises 512 residues: Inosine-5'-monophosphate dehydrogenase (512 aa).

CBS domains are found at residues Phe110 to Val169 and Met173 to Ser231. Residues Asp268–Ser270 and Gly318–Gly320 each bind NAD(+). Positions 320 and 322 each coordinate K(+). Ser323 provides a ligand contact to IMP. Residue Cys325 participates in K(+) binding. The Thioimidate intermediate role is filled by Cys325. IMP is bound by residues Asp358–Gly360, Gly381–Ser382, and Tyr405–Gly409. Arg423 serves as the catalytic Proton acceptor. Gln435 lines the IMP pocket. K(+) contacts are provided by Glu494 and Gly495. Positions Ser510 to Leu512 match the Microbody targeting signal motif.

This sequence belongs to the IMPDH/GMPR family. As to quaternary structure, homotetramer. It depends on K(+) as a cofactor.

The protein resides in the glycosome. The catalysed reaction is IMP + NAD(+) + H2O = XMP + NADH + H(+). The protein operates within purine metabolism; XMP biosynthesis via de novo pathway; XMP from IMP: step 1/1. Mycophenolic acid (MPA) is a non-competitive inhibitor that prevents formation of the closed enzyme conformation by binding to the same site as the amobile flap. In contrast, mizoribine monophosphate (MZP) is a competitive inhibitor that induces the closed conformation. MPA is a potent inhibitor of mammalian IMPDHs but a poor inhibitor of the bacterial enzymes. MZP is a more potent inhibitor of bacterial IMPDH. Catalyzes the conversion of inosine 5'-phosphate (IMP) to xanthosine 5'-phosphate (XMP), the first committed and rate-limiting step in the de novo synthesis of guanine nucleotides, and therefore plays an important role in the regulation of cell growth. This Trypanosoma brucei brucei protein is Inosine-5'-monophosphate dehydrogenase.